A 191-amino-acid polypeptide reads, in one-letter code: Calcium-binding protein CML42 (191 aa).

EF-hand domains lie at 25–60 (LNAL…LGLN), 116–151 (ENES…LGLP), and 154–189 (GEME…VVIP). 13 residues coordinate Ca(2+): D38, N40, D42, E49, D129, N131, D133, E140, D167, N169, D171, R173, and E178.

Interacts with KIC. In terms of tissue distribution, expressed in seedling shoots, roots, rosette leaves and flowers. Expressed in the leaf trichome support cells.

In terms of biological role, probable calcium sensor that binds calcium in vitro. Involved in the regulation of trichome branching. The protein is Calcium-binding protein CML42 (CML42) of Arabidopsis thaliana (Mouse-ear cress).